The following is a 245-amino-acid chain: PF03932 family protein CutC (245 aa).

Belongs to the CutC family.

The protein localises to the cytoplasm. This chain is PF03932 family protein CutC, found in Sinorhizobium medicae (strain WSM419) (Ensifer medicae).